Here is a 199-residue protein sequence, read N- to C-terminus: MIGCLIGEVFALEAPTVLLNVNGVGYEIDTPLSTFCQLQKGQKVTLWTHLVVREDAQQLYGFSDAQEKTIFRTLLKVNGVGPKMALGILSTLNVELLVHTIEHDDVNTLVKVPGVGKKTAERLMIELRDRFKTLAQGTSSAAALPQIQFVSNSPVAEAEAALQSLGYKPLEAQKAVAAVKADYTESADIIRAALKSMMK.

The segment at 1 to 63 is domain I; it reads MIGCLIGEVF…EDAQQLYGFS (63 aa). The segment at 64–142 is domain II; that stretch reads DAQEKTIFRT…TLAQGTSSAA (79 aa). The flexible linker stretch occupies residues 143 to 150; sequence ALPQIQFV. Positions 150-199 are domain III; it reads VSNSPVAEAEAALQSLGYKPLEAQKAVAAVKADYTESADIIRAALKSMMK.

This sequence belongs to the RuvA family. In terms of assembly, homotetramer. Forms an RuvA(8)-RuvB(12)-Holliday junction (HJ) complex. HJ DNA is sandwiched between 2 RuvA tetramers; dsDNA enters through RuvA and exits via RuvB. An RuvB hexamer assembles on each DNA strand where it exits the tetramer. Each RuvB hexamer is contacted by two RuvA subunits (via domain III) on 2 adjacent RuvB subunits; this complex drives branch migration. In the full resolvosome a probable DNA-RuvA(4)-RuvB(12)-RuvC(2) complex forms which resolves the HJ.

The protein localises to the cytoplasm. The RuvA-RuvB-RuvC complex processes Holliday junction (HJ) DNA during genetic recombination and DNA repair, while the RuvA-RuvB complex plays an important role in the rescue of blocked DNA replication forks via replication fork reversal (RFR). RuvA specifically binds to HJ cruciform DNA, conferring on it an open structure. The RuvB hexamer acts as an ATP-dependent pump, pulling dsDNA into and through the RuvAB complex. HJ branch migration allows RuvC to scan DNA until it finds its consensus sequence, where it cleaves and resolves the cruciform DNA. This Acinetobacter baumannii (strain ACICU) protein is Holliday junction branch migration complex subunit RuvA.